Reading from the N-terminus, the 124-residue chain is Small ribosomal subunit protein uS12 (124 aa).

Residues 1–30 (MPTIQQLVRKGRQDKVAKTKTAALKGSPQR) form a disordered region. A 3-methylthioaspartic acid modification is found at Asp-89. Residues 102–124 (ADTQGVKNRKQARSRYGAKKEKS) form a disordered region. Positions 108 to 118 (KNRKQARSRYG) are enriched in basic residues.

It belongs to the universal ribosomal protein uS12 family. In terms of assembly, part of the 30S ribosomal subunit. Contacts proteins S8 and S17. May interact with IF1 in the 30S initiation complex.

With S4 and S5 plays an important role in translational accuracy. Functionally, interacts with and stabilizes bases of the 16S rRNA that are involved in tRNA selection in the A site and with the mRNA backbone. Located at the interface of the 30S and 50S subunits, it traverses the body of the 30S subunit contacting proteins on the other side and probably holding the rRNA structure together. The combined cluster of proteins S8, S12 and S17 appears to hold together the shoulder and platform of the 30S subunit. The polypeptide is Small ribosomal subunit protein uS12 (Saccharopolyspora erythraea (strain ATCC 11635 / DSM 40517 / JCM 4748 / NBRC 13426 / NCIMB 8594 / NRRL 2338)).